A 355-amino-acid chain; its full sequence is uncharacterized protein (355 aa).

This sequence belongs to the serpin family. Poxviruses subfamily.

This is an uncharacterized protein from Vertebrata (FPV).